The primary structure comprises 261 residues: Ribonuclease PH (261 aa).

Phosphate is bound by residues Arg-86 and 124–126; that span reads GTR.

The protein belongs to the RNase PH family. As to quaternary structure, homohexameric ring arranged as a trimer of dimers.

The enzyme catalyses tRNA(n+1) + phosphate = tRNA(n) + a ribonucleoside 5'-diphosphate. Phosphorolytic 3'-5' exoribonuclease that plays an important role in tRNA 3'-end maturation. Removes nucleotide residues following the 3'-CCA terminus of tRNAs; can also add nucleotides to the ends of RNA molecules by using nucleoside diphosphates as substrates, but this may not be physiologically important. Probably plays a role in initiation of 16S rRNA degradation (leading to ribosome degradation) during starvation. In Persephonella marina (strain DSM 14350 / EX-H1), this protein is Ribonuclease PH.